Consider the following 39-residue polypeptide: Photosystem II reaction center protein X (39 aa).

The chain crosses the membrane as a helical span at residues S11–S31.

The protein belongs to the PsbX family. Type 1 subfamily. As to quaternary structure, PSII is composed of 1 copy each of membrane proteins PsbA, PsbB, PsbC, PsbD, PsbE, PsbF, PsbH, PsbI, PsbJ, PsbK, PsbL, PsbM, PsbT, PsbX, PsbY, PsbZ, Psb30/Ycf12, at least 3 peripheral proteins of the oxygen-evolving complex and a large number of cofactors. It forms dimeric complexes.

It is found in the plastid. The protein resides in the cyanelle thylakoid membrane. Its function is as follows. Involved in the binding and/or turnover of quinones at the Q(B) site of photosystem II (PSII). PSII is a light-driven water plastoquinone oxidoreductase, using light energy to abstract electrons from H(2)O, generating a proton gradient subsequently used for ATP formation. This Cyanophora paradoxa protein is Photosystem II reaction center protein X.